The sequence spans 314 residues: Leucotoxin LukE (314 aa).

The N-terminal stretch at methionine 1–alanine 28 is a signal peptide.

It belongs to the aerolysin family. Toxicity requires sequential binding and synergistic association of a class S and a class F component which form heterooligomeric complexes. LukE (class S) associates with LukD (class F). LukE can also associate with HlgB.

Its subcellular location is the secreted. Part of a bi-component leucotoxin that acts by forming pores in the membrane of the target cells. LukE-LukD is as effective as the Panton-Valentine leucocidin (PVL) for inducing dermonecrosis when injected in the rabbit skin, but not hemolytic and poorly leucotoxic on human blood cells compared to other leucotoxins expressed by S.aureus. This is Leucotoxin LukE (lukE) from Staphylococcus aureus.